A 55-amino-acid chain; its full sequence is Large ribosomal subunit protein bL33B (55 aa).

This sequence belongs to the bacterial ribosomal protein bL33 family.

This Salinispora arenicola (strain CNS-205) protein is Large ribosomal subunit protein bL33B.